Consider the following 205-residue polypeptide: Small ribosomal subunit protein uS4 (205 aa).

Positions 94–157 (SRLDTVVYRM…KQIPLIQESV (64 aa)) constitute an S4 RNA-binding domain.

It belongs to the universal ribosomal protein uS4 family. Part of the 30S ribosomal subunit. Contacts protein S5. The interaction surface between S4 and S5 is involved in control of translational fidelity.

Its function is as follows. One of the primary rRNA binding proteins, it binds directly to 16S rRNA where it nucleates assembly of the body of the 30S subunit. With S5 and S12 plays an important role in translational accuracy. In Rickettsia felis (strain ATCC VR-1525 / URRWXCal2) (Rickettsia azadi), this protein is Small ribosomal subunit protein uS4.